The sequence spans 101 residues: Large ribosomal subunit protein eL31 (101 aa).

This sequence belongs to the eukaryotic ribosomal protein eL31 family.

In Ignicoccus hospitalis (strain KIN4/I / DSM 18386 / JCM 14125), this protein is Large ribosomal subunit protein eL31.